The chain runs to 197 residues: dTTP/UTP pyrophosphatase (197 aa).

Catalysis depends on Asp70, which acts as the Proton acceptor.

Belongs to the Maf family. YhdE subfamily. Homodimer. Can also form homotetramers. The cofactor is a divalent metal cation.

Its subcellular location is the cytoplasm. The enzyme catalyses dTTP + H2O = dTMP + diphosphate + H(+). The catalysed reaction is UTP + H2O = UMP + diphosphate + H(+). It carries out the reaction 5-methyl-UTP + H2O = 5-methyl-UMP + diphosphate + H(+). It catalyses the reaction psi-UTP + H2O = psi-UMP + diphosphate + H(+). The enzyme catalyses 5-methyl-CTP + H2O = 5-methyl-CMP + diphosphate + H(+). In terms of biological role, nucleoside triphosphate pyrophosphatase that hydrolyzes dTTP and UTP. Can also hydrolyze TTP and the modified nucleotides 5-methyl-UTP (m(5)UTP), pseudo-UTP and 5-methyl-CTP (m(5)CTP). Has weak activity with CTP. May have a dual role in cell division arrest and in preventing the incorporation of modified nucleotides into cellular nucleic acids. Important in maintenance of cell shape. This chain is dTTP/UTP pyrophosphatase (yhdE), found in Escherichia coli (strain K12).